We begin with the raw amino-acid sequence, 197 residues long: uncharacterized protein (197 aa).

4 helical membrane-spanning segments follow: residues 11 to 31 (IALIVVGIIALFLPWLTISAS), 85 to 105 (STFMMIFGIIPIILYIASIFV), 109 to 129 (AVVVGAGIAGITCASIFVVLF), and 174 to 194 (VGTGWYLTMIIGLALIAYPFI).

The protein resides in the cell membrane. This is an uncharacterized protein from Methanocaldococcus jannaschii (strain ATCC 43067 / DSM 2661 / JAL-1 / JCM 10045 / NBRC 100440) (Methanococcus jannaschii).